The following is an 86-amino-acid chain: Large ribosomal subunit protein bL31B (86 aa).

The protein belongs to the bacterial ribosomal protein bL31 family. Type B subfamily. Part of the 50S ribosomal subunit.

This chain is Large ribosomal subunit protein bL31B, found in Vibrio parahaemolyticus serotype O3:K6 (strain RIMD 2210633).